Here is a 1377-residue protein sequence, read N- to C-terminus: DNA-directed RNA polymerase subunit beta (1377 aa).

The protein belongs to the RNA polymerase beta chain family. In terms of assembly, the RNAP catalytic core consists of 2 alpha, 1 beta, 1 beta' and 1 omega subunit. When a sigma factor is associated with the core the holoenzyme is formed, which can initiate transcription.

The catalysed reaction is RNA(n) + a ribonucleoside 5'-triphosphate = RNA(n+1) + diphosphate. Functionally, DNA-dependent RNA polymerase catalyzes the transcription of DNA into RNA using the four ribonucleoside triphosphates as substrates. This Brucella abortus (strain S19) protein is DNA-directed RNA polymerase subunit beta.